The sequence spans 398 residues: tRNA-specific 2-thiouridylase MnmA (398 aa).

ATP contacts are provided by residues 18-25 (AMSGGVDS) and leucine 44. Cysteine 112 acts as the Nucleophile in catalysis. Cysteine 112 and cysteine 213 are disulfide-bonded. An ATP-binding site is contributed by glycine 136. The tract at residues 163–165 (RDQ) is interaction with tRNA. Residue cysteine 213 is the Cysteine persulfide intermediate of the active site.

The protein belongs to the MnmA/TRMU family.

It is found in the cytoplasm. It carries out the reaction S-sulfanyl-L-cysteinyl-[protein] + uridine(34) in tRNA + AH2 + ATP = 2-thiouridine(34) in tRNA + L-cysteinyl-[protein] + A + AMP + diphosphate + H(+). Functionally, catalyzes the 2-thiolation of uridine at the wobble position (U34) of tRNA, leading to the formation of s(2)U34. This is tRNA-specific 2-thiouridylase MnmA from Sinorhizobium medicae (strain WSM419) (Ensifer medicae).